Reading from the N-terminus, the 1299-residue chain is DNA-directed RNA polymerase subunit beta' (1299 aa).

The Zn(2+) site is built by cysteine 60, cysteine 62, cysteine 75, and cysteine 78. Residues aspartate 535, aspartate 537, and aspartate 539 each coordinate Mg(2+). Zn(2+)-binding residues include cysteine 877, cysteine 954, cysteine 961, and cysteine 964.

It belongs to the RNA polymerase beta' chain family. The RNAP catalytic core consists of 2 alpha, 1 beta, 1 beta' and 1 omega subunit. When a sigma factor is associated with the core the holoenzyme is formed, which can initiate transcription. It depends on Mg(2+) as a cofactor. The cofactor is Zn(2+).

The enzyme catalyses RNA(n) + a ribonucleoside 5'-triphosphate = RNA(n+1) + diphosphate. In terms of biological role, DNA-dependent RNA polymerase catalyzes the transcription of DNA into RNA using the four ribonucleoside triphosphates as substrates. The sequence is that of DNA-directed RNA polymerase subunit beta' from Paenarthrobacter aurescens (strain TC1).